The primary structure comprises 431 residues: ORC1-type DNA replication protein 14 (431 aa).

ATP contacts are provided by residues 62–66, Tyr219, and Arg231; that span reads TGKSL.

This sequence belongs to the CDC6/cdc18 family.

Its function is as follows. Involved in regulation of DNA replication. The sequence is that of ORC1-type DNA replication protein 14 (cdc6n) from Haloarcula marismortui (strain ATCC 43049 / DSM 3752 / JCM 8966 / VKM B-1809) (Halobacterium marismortui).